A 232-amino-acid polypeptide reads, in one-letter code: 2,3,4,5-tetrahydropyridine-2,6-dicarboxylate N-acetyltransferase (232 aa).

Belongs to the transferase hexapeptide repeat family. DapH subfamily.

It catalyses the reaction (S)-2,3,4,5-tetrahydrodipicolinate + acetyl-CoA + H2O = L-2-acetamido-6-oxoheptanedioate + CoA. It participates in amino-acid biosynthesis; L-lysine biosynthesis via DAP pathway; LL-2,6-diaminopimelate from (S)-tetrahydrodipicolinate (acetylase route): step 1/3. Its function is as follows. Catalyzes the transfer of an acetyl group from acetyl-CoA to tetrahydrodipicolinate. The polypeptide is 2,3,4,5-tetrahydropyridine-2,6-dicarboxylate N-acetyltransferase (Streptococcus pneumoniae serotype 2 (strain D39 / NCTC 7466)).